Reading from the N-terminus, the 70-residue chain is DNA-directed RNA polymerase subunit omega (70 aa).

It belongs to the RNA polymerase subunit omega family. As to quaternary structure, the RNAP catalytic core consists of 2 alpha, 1 beta, 1 beta' and 1 omega subunit. When a sigma factor is associated with the core the holoenzyme is formed, which can initiate transcription.

It carries out the reaction RNA(n) + a ribonucleoside 5'-triphosphate = RNA(n+1) + diphosphate. Promotes RNA polymerase assembly. Latches the N- and C-terminal regions of the beta' subunit thereby facilitating its interaction with the beta and alpha subunits. The sequence is that of DNA-directed RNA polymerase subunit omega from Bacillus cytotoxicus (strain DSM 22905 / CIP 110041 / 391-98 / NVH 391-98).